A 255-amino-acid chain; its full sequence is Imidazole glycerol phosphate synthase subunit HisF (255 aa).

Active-site residues include Asp11 and Asp130.

The protein belongs to the HisA/HisF family. In terms of assembly, heterodimer of HisH and HisF.

It is found in the cytoplasm. It carries out the reaction 5-[(5-phospho-1-deoxy-D-ribulos-1-ylimino)methylamino]-1-(5-phospho-beta-D-ribosyl)imidazole-4-carboxamide + L-glutamine = D-erythro-1-(imidazol-4-yl)glycerol 3-phosphate + 5-amino-1-(5-phospho-beta-D-ribosyl)imidazole-4-carboxamide + L-glutamate + H(+). It participates in amino-acid biosynthesis; L-histidine biosynthesis; L-histidine from 5-phospho-alpha-D-ribose 1-diphosphate: step 5/9. Functionally, IGPS catalyzes the conversion of PRFAR and glutamine to IGP, AICAR and glutamate. The HisF subunit catalyzes the cyclization activity that produces IGP and AICAR from PRFAR using the ammonia provided by the HisH subunit. The polypeptide is Imidazole glycerol phosphate synthase subunit HisF (Campylobacter jejuni subsp. jejuni serotype O:6 (strain 81116 / NCTC 11828)).